Consider the following 325-residue polypeptide: GMP reductase (325 aa).

Cys173 acts as the Thioimidate intermediate in catalysis. 202 to 225 (IIADGGIRSHGDIAKSVRFGATMV) contacts NADP(+).

The protein belongs to the IMPDH/GMPR family. GuaC type 2 subfamily.

The enzyme catalyses IMP + NH4(+) + NADP(+) = GMP + NADPH + 2 H(+). Its function is as follows. Catalyzes the irreversible NADPH-dependent deamination of GMP to IMP. It functions in the conversion of nucleobase, nucleoside and nucleotide derivatives of G to A nucleotides, and in maintaining the intracellular balance of A and G nucleotides. This chain is GMP reductase, found in Delftia acidovorans (strain DSM 14801 / SPH-1).